A 223-amino-acid chain; its full sequence is Cytochrome c biogenesis ATP-binding export protein CcmA (223 aa).

The 223-residue stretch at 1–223 folds into the ABC transporter domain; the sequence is MRSLACERDE…KSDMAVGNDY (223 aa). An ATP-binding site is contributed by 31–38; sequence GSNGAGKT.

It belongs to the ABC transporter superfamily. CcmA exporter (TC 3.A.1.107) family. In terms of assembly, the complex is composed of two ATP-binding proteins (CcmA) and two transmembrane proteins (CcmB).

It localises to the cell inner membrane. It catalyses the reaction heme b(in) + ATP + H2O = heme b(out) + ADP + phosphate + H(+). In terms of biological role, part of the ABC transporter complex CcmAB involved in the biogenesis of c-type cytochromes; once thought to export heme, this seems not to be the case, but its exact role is uncertain. Responsible for energy coupling to the transport system. In Saccharophagus degradans (strain 2-40 / ATCC 43961 / DSM 17024), this protein is Cytochrome c biogenesis ATP-binding export protein CcmA.